A 156-amino-acid chain; its full sequence is ATP synthase subunit b (156 aa).

The chain crosses the membrane as a helical span at residues 11–31 (AIAFILFVWFCMKYVWPPLMA).

The protein belongs to the ATPase B chain family. As to quaternary structure, F-type ATPases have 2 components, F(1) - the catalytic core - and F(0) - the membrane proton channel. F(1) has five subunits: alpha(3), beta(3), gamma(1), delta(1), epsilon(1). F(0) has three main subunits: a(1), b(2) and c(10-14). The alpha and beta chains form an alternating ring which encloses part of the gamma chain. F(1) is attached to F(0) by a central stalk formed by the gamma and epsilon chains, while a peripheral stalk is formed by the delta and b chains.

It is found in the cell inner membrane. F(1)F(0) ATP synthase produces ATP from ADP in the presence of a proton or sodium gradient. F-type ATPases consist of two structural domains, F(1) containing the extramembraneous catalytic core and F(0) containing the membrane proton channel, linked together by a central stalk and a peripheral stalk. During catalysis, ATP synthesis in the catalytic domain of F(1) is coupled via a rotary mechanism of the central stalk subunits to proton translocation. In terms of biological role, component of the F(0) channel, it forms part of the peripheral stalk, linking F(1) to F(0). In Enterobacter sp. (strain 638), this protein is ATP synthase subunit b.